A 303-amino-acid polypeptide reads, in one-letter code: MQPQELKTIMGSGLLSFPLTDFDSEGHFNARGYAERLEWLAPYGASALFAAGGTGEFFSLTADEYPAIIETAVQTCRGKVPIIAGAGGPTRFAIQCAQAAEKAGAHGILLLPHYLTEAGQEGLAAHVEAVCKSVKFGVIVYNRGQSRFTPETLARLAERNANLVGFKDGVGDIELMNSIYMKMGDRFAYLGGLPTAEVYAAAYKALGTPVYSSAVFNFIPKTAMDFYHAVANDDQATQHRLLRSFFMPYLALRNRMPGYAVSIVKAGAKIVGHDAGPVRAPLTDLKADEMAALKALIDQLGPQ.

The protein belongs to the DapA family.

The catalysed reaction is 5-dehydro-4-deoxy-D-glucarate + H(+) = 2,5-dioxopentanoate + CO2 + H2O. It participates in carbohydrate acid metabolism; D-glucarate degradation; 2,5-dioxopentanoate from D-glucarate: step 2/2. The sequence is that of Probable 5-dehydro-4-deoxyglucarate dehydratase from Paracidovorax citrulli (strain AAC00-1) (Acidovorax citrulli).